A 36-amino-acid chain; its full sequence is U-metritoxin-Msn1a (36 aa).

Positions 4–36 (CKDKLPACGEYRGSFCKLEKVKSNCEKTCGVKC) constitute a ShKT domain. Cystine bridges form between cysteine 4–cysteine 36, cysteine 11–cysteine 28, and cysteine 19–cysteine 32.

It belongs to the sea anemone type 1 potassium channel toxin family. Type 1b subfamily.

The protein resides in the secreted. The protein localises to the nematocyst. In terms of biological role, has hemolytic activity. Inhibits voltage-gated potassium channels (Kv1/KCNA). The protein is U-metritoxin-Msn1a of Metridium senile (Brown sea anemone).